We begin with the raw amino-acid sequence, 529 residues long: Protein PNS1 (529 aa).

Residues 1–58 form a disordered region; sequence MSQQYSYGGGGGAGYPPPQMQPPNSYAQANYQGQPQGAQNQYYNGQQPHHNAPQQYYG. At 1-84 the chain is on the cytoplasmic side; sequence MSQQYSYGGG…LQPKPKFRDP (84 aa). Over residues 22–48 the composition is skewed to low complexity; that stretch reads PPNSYAQANYQGQPQGAQNQYYNGQQP. A helical membrane pass occupies residues 85-105; the sequence is IFLVLFLLVFAGFIALSVICL. At 106–132 the chain is on the extracellular side; the sequence is RSYSNADVNVSIGRANVAGSTLNGHTA. N114 carries an N-linked (GlcNAc...) asparagine glycan. The chain crosses the membrane as a helical span at residues 133-153; it reads IMFMICCAVALVLSFVYILLV. At 154–158 the chain is on the cytoplasmic side; that stretch reads RTFPK. A helical transmembrane segment spans residues 159–179; it reads IILEATLLLTTLSNVAFCVYL. At 180 to 184 the chain is on the extracellular side; sequence WVRGN. A helical membrane pass occupies residues 185-205; it reads TAAAIIFTIFAVLSVIAYFFM. Residues 206–230 are Cytoplasmic-facing; sequence RKRIPLAKLILVTVIRTAEQYKSVY. A helical membrane pass occupies residues 231–251; it reads VVALGGLIVETAFSAWTSWVV. Over 252–271 the chain is Extracellular; sequence VAAYQRFEPSGQAAGSSSSN. N271 carries an N-linked (GlcNAc...) asparagine glycan. Residues 272-292 traverse the membrane as a helical segment; the sequence is ASIIGIMVFIVFAYYWISEVI. Topologically, residues 293–294 are cytoplasmic; it reads KN. Residues 295-315 form a helical membrane-spanning segment; the sequence is IAFTTVAGIFGVAYYNANKVA. The Extracellular segment spans residues 316 to 325; it reads NAAWGAFRRS. Residues 326–346 form a helical membrane-spanning segment; sequence MTYSLGSICFGSLIVAILDLL. Over 347–362 the chain is Cytoplasmic; the sequence is RALFNILQSQAASDGD. The chain crosses the membrane as a helical span at residues 363–383; sequence MTGQILACVAGCCVSCIQGLV. At 384 to 427 the chain is on the extracellular side; the sequence is DYFNRYAYINIALYGNGYITAAKETWALLKDRGIDAIINDSLVN. N422 carries an N-linked (GlcNAc...) asparagine glycan. A helical transmembrane segment spans residues 428 to 448; that stretch reads IVFNCGAFIIGLLTALFAFIY. At 449–464 the chain is on the cytoplasmic side; the sequence is EQLTNPRYLQNDAGYY. The helical transmembrane segment at 465-485 threads the bilayer; it reads SIVLLVAFGLGFNIALSVGAG. At 486-529 the chain is on the extracellular side; it reads SIASGVSTYFVALAEDPYILQGKNPELFEMIRQQYPQVVQGVNH.

The protein belongs to the CTL (choline transporter-like) family.

It localises to the cell membrane. Functionally, probably involved in transport through the plasma membrane. The chain is Protein PNS1 (PNS1) from Mycosarcoma maydis (Corn smut fungus).